The following is a 132-amino-acid chain: Proline-rich protein sgp2 (132 aa).

An N-terminal signal peptide occupies residues Met-1 to Ala-20. 2 disordered regions span residues Glu-23–Arg-62 and Gly-87–Pro-132. The segment covering Lys-36–Glu-47 has biased composition (basic and acidic residues). The segment covering Gly-51–Arg-62 has biased composition (polar residues). Residues Pro-91–Met-105 show a composition bias toward low complexity.

Its subcellular location is the secreted. This Glossina morsitans morsitans (Savannah tsetse fly) protein is Proline-rich protein sgp2 (sgp2).